Here is a 511-residue protein sequence, read N- to C-terminus: Probable Xaa-Pro aminopeptidase MAA_08947 (511 aa).

Residues Asp275, Asp286, Glu439, and Glu480 each contribute to the Mn(2+) site.

This sequence belongs to the peptidase M24B family. The cofactor is Mn(2+).

The enzyme catalyses Release of any N-terminal amino acid, including proline, that is linked to proline, even from a dipeptide or tripeptide.. Functionally, catalyzes the removal of a penultimate prolyl residue from the N-termini of peptides. The chain is Probable Xaa-Pro aminopeptidase MAA_08947 from Metarhizium robertsii (strain ARSEF 23 / ATCC MYA-3075) (Metarhizium anisopliae (strain ARSEF 23)).